The chain runs to 317 residues: Endochitinase 3 (317 aa).

An N-terminal signal peptide occupies residues 1-19 (MFVRNALVVTGLLAALTQA). 3 N-linked (GlcNAc...) asparagine glycosylation sites follow: Asn-25, Asn-49, and Asn-169. Residues 29–317 (HKLTVYWGAE…NYQKEIKANL (289 aa)) form the GH18 domain. Glu-170 (proton donor) is an active-site residue. The N-linked (GlcNAc...) asparagine glycan is linked to Asn-245.

Belongs to the glycosyl hydrolase 18 family. Chitinase class III subfamily.

Its subcellular location is the secreted. It carries out the reaction Random endo-hydrolysis of N-acetyl-beta-D-glucosaminide (1-&gt;4)-beta-linkages in chitin and chitodextrins.. Its function is as follows. Secreted chitinase involved in the degradation of chitin, a component of the cell walls of fungi and exoskeletal elements of some animals (including worms and arthropods). Participates in the infection process and directly acts in the penetration process of the host cuticle. Involved in heat-shock adaptation. The protein is Endochitinase 3 (chi3) of Metarhizium robertsii (strain ARSEF 23 / ATCC MYA-3075) (Metarhizium anisopliae (strain ARSEF 23)).